The sequence spans 104 residues: Large ribosomal subunit protein uL24 (104 aa).

The protein belongs to the universal ribosomal protein uL24 family. Part of the 50S ribosomal subunit.

One of two assembly initiator proteins, it binds directly to the 5'-end of the 23S rRNA, where it nucleates assembly of the 50S subunit. Functionally, one of the proteins that surrounds the polypeptide exit tunnel on the outside of the subunit. The sequence is that of Large ribosomal subunit protein uL24 from Rhodopseudomonas palustris (strain BisA53).